The sequence spans 110 residues: UPF0060 membrane protein Dtpsy_1668 (110 aa).

4 consecutive transmembrane segments (helical) span residues 7 to 27 (LALFLLTAVAEIVGCYLPWLW), 33 to 53 (SAWLLVPAAASLALFAWLLTL), 63 to 83 (AAYGGVYVAVALVWLWTVDGV), and 86 to 106 (GPWDWLGVSVTLCGMAIIAFA).

The protein belongs to the UPF0060 family.

It is found in the cell inner membrane. This is UPF0060 membrane protein Dtpsy_1668 from Acidovorax ebreus (strain TPSY) (Diaphorobacter sp. (strain TPSY)).